Consider the following 246-residue polypeptide: E3 ubiquitin-protein ligase MARCHF2 (246 aa).

An RING-CH-type zinc finger spans residues 56 to 116 (GTQSDGPICR…ELCHTEFAVE (61 aa)). Residues Cys-64, Cys-67, Cys-80, Cys-82, His-90, Cys-93, Cys-106, and Cys-109 each coordinate Zn(2+). The next 2 helical transmembrane spans lie at 138–158 (LFCD…SGWL) and 175–195 (AVGL…WTLV).

Its subcellular location is the endoplasmic reticulum membrane. It localises to the lysosome membrane. The protein resides in the endosome membrane. The catalysed reaction is S-ubiquitinyl-[E2 ubiquitin-conjugating enzyme]-L-cysteine + [acceptor protein]-L-lysine = [E2 ubiquitin-conjugating enzyme]-L-cysteine + N(6)-ubiquitinyl-[acceptor protein]-L-lysine.. The protein operates within protein modification; protein ubiquitination. In terms of biological role, E3 ubiquitin-protein ligase which may be involved in endosomal trafficking. E3 ubiquitin ligases accept ubiquitin from an E2 ubiquitin-conjugating enzyme in the form of a thioester and then directly transfer the ubiquitin to targeted substrates. The sequence is that of E3 ubiquitin-protein ligase MARCHF2 (marchf2) from Xenopus laevis (African clawed frog).